The sequence spans 144 residues: Peptide methionine sulfoxide reductase MsrB (144 aa).

One can recognise a MsrB domain in the interval 5 to 127 (KEEKIKSLNR…NSAALRFIPK (123 aa)). C116 (nucleophile) is an active-site residue.

Belongs to the MsrB Met sulfoxide reductase family.

It carries out the reaction L-methionyl-[protein] + [thioredoxin]-disulfide + H2O = L-methionyl-(R)-S-oxide-[protein] + [thioredoxin]-dithiol. This is Peptide methionine sulfoxide reductase MsrB from Bacillus velezensis (strain DSM 23117 / BGSC 10A6 / LMG 26770 / FZB42) (Bacillus amyloliquefaciens subsp. plantarum).